We begin with the raw amino-acid sequence, 1009 residues long: 2-oxoglutarate dehydrogenase, mitochondrial (1009 aa).

The N-terminal 39 residues, 1–39 (MLRFIPSSAKARALRRSAVTAYRLNRLTCLSSLQQNRTF), are a transit peptide targeting the mitochondrion. Positions 305, 404, 437, 439, and 669 each coordinate thiamine diphosphate. Mg(2+)-binding residues include Asp404, Asn437, and Ile439.

This sequence belongs to the alpha-ketoglutarate dehydrogenase family. The cofactor is thiamine diphosphate. It depends on Mg(2+) as a cofactor.

Its subcellular location is the mitochondrion matrix. It carries out the reaction N(6)-[(R)-lipoyl]-L-lysyl-[protein] + 2-oxoglutarate + H(+) = N(6)-[(R)-S(8)-succinyldihydrolipoyl]-L-lysyl-[protein] + CO2. With respect to regulation, catabolite repressed. Its function is as follows. The 2-oxoglutarate dehydrogenase complex catalyzes the overall conversion of 2-oxoglutarate to succinyl-CoA and CO(2). It contains multiple copies of three enzymatic components: 2-oxoglutarate dehydrogenase (E1), dihydrolipoamide succinyltransferase (E2) and lipoamide dehydrogenase (E3). The chain is 2-oxoglutarate dehydrogenase, mitochondrial (kgd1) from Schizosaccharomyces pombe (strain 972 / ATCC 24843) (Fission yeast).